Here is a 374-residue protein sequence, read N- to C-terminus: Probable dual-specificity RNA methyltransferase RlmN 3 (374 aa).

Glu-96 functions as the Proton acceptor in the catalytic mechanism. Residues 110 to 350 form the Radical SAM core domain; that stretch reads DHSRKTICIS…VTLRREKGHD (241 aa). Cys-117 and Cys-355 are disulfide-bonded. [4Fe-4S] cluster contacts are provided by Cys-124, Cys-128, and Cys-131. S-adenosyl-L-methionine is bound by residues 181–182, Ser-213, 236–238, and Asn-312; these read GE and SLH. Residue Cys-355 is the S-methylcysteine intermediate of the active site.

Belongs to the radical SAM superfamily. RlmN family. It depends on [4Fe-4S] cluster as a cofactor.

Its subcellular location is the cytoplasm. The enzyme catalyses adenosine(2503) in 23S rRNA + 2 reduced [2Fe-2S]-[ferredoxin] + 2 S-adenosyl-L-methionine = 2-methyladenosine(2503) in 23S rRNA + 5'-deoxyadenosine + L-methionine + 2 oxidized [2Fe-2S]-[ferredoxin] + S-adenosyl-L-homocysteine. It catalyses the reaction adenosine(37) in tRNA + 2 reduced [2Fe-2S]-[ferredoxin] + 2 S-adenosyl-L-methionine = 2-methyladenosine(37) in tRNA + 5'-deoxyadenosine + L-methionine + 2 oxidized [2Fe-2S]-[ferredoxin] + S-adenosyl-L-homocysteine. Its function is as follows. Specifically methylates position 2 of adenine 2503 in 23S rRNA and position 2 of adenine 37 in tRNAs. The sequence is that of Probable dual-specificity RNA methyltransferase RlmN 3 from Opitutus terrae (strain DSM 11246 / JCM 15787 / PB90-1).